Reading from the N-terminus, the 79-residue chain is Calcium/calmodulin-dependent protein kinase II inhibitor 2 (79 aa).

Positions 1 to 21 are disordered; sequence MSEILPYGEDKMGRFGADPEG. Residues 43–69 are inhibitory domain; the sequence is KRPPKLGQIGRAKRVVIEDDRIDDVLK.

Belongs to the CAMK2N family. Interacts with CAMK2A and CAMK2B in the presence of Ca(2+)/calmodulin or after autophosphorylation.

It is found in the nucleus. The protein resides in the cytoplasm. Its subcellular location is the cytosol. The protein localises to the synapse. Its function is as follows. Potent and specific cellular inhibitor of CaM-kinase II (CAMK2). Traps Ca(2+)/calmodulin on CAMK2. The chain is Calcium/calmodulin-dependent protein kinase II inhibitor 2 (Camk2n2) from Mus musculus (Mouse).